A 393-amino-acid chain; its full sequence is NAD(P)H-quinone oxidoreductase subunit H, chloroplastic (393 aa).

This sequence belongs to the complex I 49 kDa subunit family. NDH is composed of at least 16 different subunits, 5 of which are encoded in the nucleus.

It localises to the plastid. The protein localises to the chloroplast thylakoid membrane. It catalyses the reaction a plastoquinone + NADH + (n+1) H(+)(in) = a plastoquinol + NAD(+) + n H(+)(out). The catalysed reaction is a plastoquinone + NADPH + (n+1) H(+)(in) = a plastoquinol + NADP(+) + n H(+)(out). In terms of biological role, NDH shuttles electrons from NAD(P)H:plastoquinone, via FMN and iron-sulfur (Fe-S) centers, to quinones in the photosynthetic chain and possibly in a chloroplast respiratory chain. The immediate electron acceptor for the enzyme in this species is believed to be plastoquinone. Couples the redox reaction to proton translocation, and thus conserves the redox energy in a proton gradient. The polypeptide is NAD(P)H-quinone oxidoreductase subunit H, chloroplastic (Ipomoea purpurea (Common morning glory)).